Here is a 399-residue protein sequence, read N- to C-terminus: Methylthioribose kinase (399 aa).

ATP contacts are provided by residues Asn40, Lys57, and 111-113; that span reads EDL. Asp229 is a substrate binding site. An ATP-binding site is contributed by 246 to 248; the sequence is DAE. Arg344 contributes to the substrate binding site.

It belongs to the methylthioribose kinase family. Homodimer.

The catalysed reaction is 5-(methylsulfanyl)-D-ribose + ATP = 5-(methylsulfanyl)-alpha-D-ribose 1-phosphate + ADP + H(+). It participates in amino-acid biosynthesis; L-methionine biosynthesis via salvage pathway; S-methyl-5-thio-alpha-D-ribose 1-phosphate from S-methyl-5'-thioadenosine (hydrolase route): step 2/2. Its function is as follows. Catalyzes the phosphorylation of methylthioribose into methylthioribose-1-phosphate. The protein is Methylthioribose kinase of Klebsiella pneumoniae subsp. pneumoniae (strain ATCC 700721 / MGH 78578).